A 214-amino-acid chain; its full sequence is Cytochrome b (214 aa).

4 helical membrane passes run Phe31 to Ile51, Trp75 to Ile96, Trp111 to Leu131, and Phe176 to Leu196. Xaa81 and His95 together coordinate heme b. The heme b site is built by His180 and His194. A ubiquinone is bound at residue His199.

It belongs to the cytochrome b family. As to quaternary structure, the cytochrome bc1 complex contains 3 respiratory subunits (MT-CYB, CYC1 and UQCRFS1), 2 core proteins (UQCRC1 and UQCRC2) and probably 6 low-molecular weight proteins. It depends on heme b as a cofactor.

The protein resides in the mitochondrion inner membrane. Functionally, component of the ubiquinol-cytochrome c reductase complex (complex III or cytochrome b-c1 complex) that is part of the mitochondrial respiratory chain. The b-c1 complex mediates electron transfer from ubiquinol to cytochrome c. Contributes to the generation of a proton gradient across the mitochondrial membrane that is then used for ATP synthesis. The protein is Cytochrome b (MT-CYB) of Bothriechis schlegelii (Eyelash palm pitviper).